The sequence spans 230 residues: Cytidylate kinase (230 aa).

12-20 (GPSGAGKGT) lines the ATP pocket.

It belongs to the cytidylate kinase family. Type 1 subfamily.

It localises to the cytoplasm. It catalyses the reaction CMP + ATP = CDP + ADP. The catalysed reaction is dCMP + ATP = dCDP + ADP. The chain is Cytidylate kinase from Shewanella pealeana (strain ATCC 700345 / ANG-SQ1).